A 222-amino-acid chain; its full sequence is 7-cyano-7-deazaguanine synthase (222 aa).

9–19 lines the ATP pocket; it reads LSGGLDSATAA. The Zn(2+) site is built by Cys-190, Cys-198, Cys-201, and Cys-204.

This sequence belongs to the QueC family. Zn(2+) is required as a cofactor.

It carries out the reaction 7-carboxy-7-deazaguanine + NH4(+) + ATP = 7-cyano-7-deazaguanine + ADP + phosphate + H2O + H(+). Its pathway is purine metabolism; 7-cyano-7-deazaguanine biosynthesis. Catalyzes the ATP-dependent conversion of 7-carboxy-7-deazaguanine (CDG) to 7-cyano-7-deazaguanine (preQ(0)). This chain is 7-cyano-7-deazaguanine synthase, found in Synechococcus sp. (strain RCC307).